A 122-amino-acid polypeptide reads, in one-letter code: Small ribosomal subunit protein uS13 (122 aa).

Residues 97-122 (PVRGQRTHTNARTRKGPAKAIAGKKK) form a disordered region.

Belongs to the universal ribosomal protein uS13 family. As to quaternary structure, part of the 30S ribosomal subunit. Forms a loose heterodimer with protein S19. Forms two bridges to the 50S subunit in the 70S ribosome.

In terms of biological role, located at the top of the head of the 30S subunit, it contacts several helices of the 16S rRNA. In the 70S ribosome it contacts the 23S rRNA (bridge B1a) and protein L5 of the 50S subunit (bridge B1b), connecting the 2 subunits; these bridges are implicated in subunit movement. Contacts the tRNAs in the A and P-sites. This is Small ribosomal subunit protein uS13 from Brucella anthropi (strain ATCC 49188 / DSM 6882 / CCUG 24695 / JCM 21032 / LMG 3331 / NBRC 15819 / NCTC 12168 / Alc 37) (Ochrobactrum anthropi).